Reading from the N-terminus, the 328-residue chain is PLASTID TRANSCRIPTIONALLY ACTIVE protein 6, chloroplastic (328 aa).

The span at 1-14 (MASSAASPSLSLLS) shows a compositional bias: low complexity. Residues 1 to 21 (MASSAASPSLSLLSFTSKPPY) are disordered. The transit peptide at 1–59 (MASSAASPSLSLLSFTSKPPYPSGSQRLFASFRTDGLFAPLTLKSRRGRGIVVKVDDVD) directs the protein to the chloroplast. The short motif at 267-275 (RKRDRKDDL) is the Nuclear localization signal element. The RNA binding domain motif lies at 301–319 (EREEWTKTREDMEKHLRKL).

As to quaternary structure, subunit of the plastid-encoded RNA polymerase (PEP) complex. Component of a large nuclear subcomplex that may include other PEP subunits (e.g. PTAC12/HMR/PAP5, PTAC14/PAP7 and PTAC7/PAP12). Binds directly to PTAC12/HMR/PAP5 in the nucleus. Interacts with MTERF5. As to expression, mostly expressed in rosette leaves, stems and flowers, and, to a lower extent, in roots and cauline leaves.

Its subcellular location is the plastid. The protein localises to the chloroplast. The protein resides in the chloroplast thylakoid. It localises to the nucleus. It is found in the nucleoplasm. Its function is as follows. Essential protein involved in plastid gene expression and in chloroplast biogenesis. Links photomorphogenesis and chloroplast biogenesis through its dual localization; required for the formation of late photobodies in the nucleus, as well as for phytochrome B-mediated signaling cascade and subsequent reshaping of the plastid-encoded RNA polymerase (PEP) activity. Binds RNA via specific recognition motifs of viral origin. Recruited by MTERF5 to the transcriptionally paused region of psbEFLJ. Promotes leaf greening. The polypeptide is PLASTID TRANSCRIPTIONALLY ACTIVE protein 6, chloroplastic (Arabidopsis thaliana (Mouse-ear cress)).